Here is a 349-residue protein sequence, read N- to C-terminus: Phosphoribosylformylglycinamidine cyclo-ligase (349 aa).

This sequence belongs to the AIR synthase family.

It localises to the cytoplasm. It catalyses the reaction 2-formamido-N(1)-(5-O-phospho-beta-D-ribosyl)acetamidine + ATP = 5-amino-1-(5-phospho-beta-D-ribosyl)imidazole + ADP + phosphate + H(+). Its pathway is purine metabolism; IMP biosynthesis via de novo pathway; 5-amino-1-(5-phospho-D-ribosyl)imidazole from N(2)-formyl-N(1)-(5-phospho-D-ribosyl)glycinamide: step 2/2. This Lactobacillus delbrueckii subsp. bulgaricus (strain ATCC 11842 / DSM 20081 / BCRC 10696 / JCM 1002 / NBRC 13953 / NCIMB 11778 / NCTC 12712 / WDCM 00102 / Lb 14) protein is Phosphoribosylformylglycinamidine cyclo-ligase.